A 901-amino-acid chain; its full sequence is Protein translocase subunit SecA (901 aa).

Residues glutamine 87, 105-109 (GEGKT), and aspartate 512 contribute to the ATP site. The disordered stretch occupies residues 859 to 901 (HQDDDSAAAAALAAQTGERKVGRNDPCPCGSGKKYKQCHGRLQ). Zn(2+) is bound by residues cysteine 885, cysteine 887, cysteine 896, and histidine 897. The span at 891-901 (KKYKQCHGRLQ) shows a compositional bias: basic residues.

This sequence belongs to the SecA family. Monomer and homodimer. Part of the essential Sec protein translocation apparatus which comprises SecA, SecYEG and auxiliary proteins SecDF-YajC and YidC. Requires Zn(2+) as cofactor.

It is found in the cell inner membrane. The protein resides in the cytoplasm. The enzyme catalyses ATP + H2O + cellular proteinSide 1 = ADP + phosphate + cellular proteinSide 2.. Part of the Sec protein translocase complex. Interacts with the SecYEG preprotein conducting channel. Has a central role in coupling the hydrolysis of ATP to the transfer of proteins into and across the cell membrane, serving both as a receptor for the preprotein-SecB complex and as an ATP-driven molecular motor driving the stepwise translocation of polypeptide chains across the membrane. The polypeptide is Protein translocase subunit SecA (Escherichia coli O9:H4 (strain HS)).